Consider the following 491-residue polypeptide: Lysine--tRNA ligase (491 aa).

2 residues coordinate Mg(2+): Glu398 and Glu405.

This sequence belongs to the class-II aminoacyl-tRNA synthetase family. Homodimer. Requires Mg(2+) as cofactor.

Its subcellular location is the cytoplasm. The enzyme catalyses tRNA(Lys) + L-lysine + ATP = L-lysyl-tRNA(Lys) + AMP + diphosphate. This Mycoplasmopsis synoviae (strain 53) (Mycoplasma synoviae) protein is Lysine--tRNA ligase.